The primary structure comprises 706 residues: MSKVRVYQLAKELGVSSKELIIKLKDLSIEVGNHMSTLNDDDANLLIELFTEDNKEVNSDSNQESKVNTDDKLDKIDKPNKIENAPSEENPKKNKKSKKKQKNKKKGPTMKDEKGLIEENTDEQILEIGESIILKDLTHMLDKTPTEVITKLIGLGMMVTINQEIDFDTAAMVASEYGVELKQAGVMDDSDVVDDLIIPEDDEKDLMSRPPVVTVMGHVDHGKTSLLDAIRKTKVTAKEAGGITQHIGASEIQINDKKIVFLDTPGHEAFTSMRARGAKVTDIAILVVAADDGVMPQTIEAINHAKAAEVPIIVAINKIDKPGANQDRVKQELSDHGILIEAWGGDVIAVPVSAIEGTNINELLEMILLVSEVEEFKANPNRQAIGVVIEAKLDKGKGTVATVLIQNGTLHVGDSVVVGSTYGRIRAMTNHVGEKLREATPSTAVEITGLSDVPEAGNQLVVVADDKMARNTAEKRAHKAKVAQQKITQRVSLDDLYNQMQQGEIKELNIIVKADVQGSVQAVKQSLEKLSNDKVSLRTIHGGVGAITESDVMLAAASNAIITGFNVRPTSTATAISKKEKVDIRTYRIIYNAIEDIEAAMVGMLDPEFKEVDLGKAEVRAAFKVPGAGVVAGSYITEGKILRSASIRLVRDGIVVHEGAIGSLRRFKDDVKEVNTGYECGIGIDKFNDVKEGDIIEAYTMEEIKR.

Residues 55–117 are disordered; sequence KEVNSDSNQE…PTMKDEKGLI (63 aa). Residues 67 to 81 show a composition bias toward basic and acidic residues; sequence VNTDDKLDKIDKPNK. Basic residues predominate over residues 93–108; that stretch reads KNKKSKKKQKNKKKGP. The tr-type G domain maps to 208–375; it reads SRPPVVTVMG…MILLVSEVEE (168 aa). The segment at 217-224 is G1; it reads GHVDHGKT. 217–224 serves as a coordination point for GTP; sequence GHVDHGKT. A G2 region spans residues 242-246; that stretch reads GITQH. The tract at residues 263 to 266 is G3; it reads DTPG. GTP contacts are provided by residues 263-267 and 317-320; these read DTPGH and NKID. The segment at 317–320 is G4; sequence NKID. A G5 region spans residues 353–355; sequence SAI.

This sequence belongs to the TRAFAC class translation factor GTPase superfamily. Classic translation factor GTPase family. IF-2 subfamily.

It is found in the cytoplasm. Its function is as follows. One of the essential components for the initiation of protein synthesis. Protects formylmethionyl-tRNA from spontaneous hydrolysis and promotes its binding to the 30S ribosomal subunits. Also involved in the hydrolysis of GTP during the formation of the 70S ribosomal complex. The chain is Translation initiation factor IF-2 from Alkaliphilus metalliredigens (strain QYMF).